Consider the following 413-residue polypeptide: uncharacterized protein (413 aa).

This is an uncharacterized protein from Bacillus subtilis (strain 168).